A 206-amino-acid polypeptide reads, in one-letter code: Transmembrane emp24 domain-containing protein bai (206 aa).

The N-terminal stretch at 1-17 (MAKATFFYFLFIGYVWP) is a signal peptide. Over 18-172 (IDSVMFNLAP…RDTNEKTNSR (155 aa)) the chain is Lumenal. The 111-residue stretch at 30–140 (QKCLKEDIQA…LKPLEVDLKR (111 aa)) folds into the GOLD domain. Residues 173–193 (VLFFSIFSMCCLLGLATWQVL) traverse the membrane as a helical segment. The Cytoplasmic portion of the chain corresponds to 194–206 (YLRRYFKAKKLIE).

This sequence belongs to the EMP24/GP25L family.

It is found in the membrane. Functionally, eca and bai are essential, though not redundant, for dorsoventral patterning of the embryo. Specifically required during early embryogenesis for the activity of maternal tkv, while the zygotic tkv is not affected. This chain is Transmembrane emp24 domain-containing protein bai, found in Drosophila persimilis (Fruit fly).